A 148-amino-acid polypeptide reads, in one-letter code: Photosystem I reaction center subunit XI (148 aa).

The next 3 membrane-spanning stretches (helical) occupy residues 48 to 68 (LEIGLAHGYFLIGPFAQLGPL), 73 to 93 (IGLLAGFLSTIGLILILTLGL), and 122 to 142 (GGFFVGACGSAGFAFICLSSI).

This sequence belongs to the PsaL family.

It is found in the plastid. The protein resides in the chloroplast thylakoid membrane. In Thalassiosira pseudonana (Marine diatom), this protein is Photosystem I reaction center subunit XI.